The sequence spans 348 residues: Glycerol-1-phosphate dehydrogenase [NAD(P)+] (348 aa).

Residues Gly94 to Asp98 and Thr116 to Ser119 contribute to the NAD(+) site. Substrate is bound at residue Asp121. NAD(+) is bound at residue Ser125. Asp168 lines the substrate pocket. Zn(2+) contacts are provided by Asp168 and His248. His252 is a binding site for substrate. His264 lines the Zn(2+) pocket.

Belongs to the glycerol-1-phosphate dehydrogenase family. In terms of assembly, homooctamer. It depends on Zn(2+) as a cofactor.

Its subcellular location is the cytoplasm. It carries out the reaction sn-glycerol 1-phosphate + NAD(+) = dihydroxyacetone phosphate + NADH + H(+). The catalysed reaction is sn-glycerol 1-phosphate + NADP(+) = dihydroxyacetone phosphate + NADPH + H(+). Its pathway is membrane lipid metabolism; glycerophospholipid metabolism. Functionally, catalyzes the NAD(P)H-dependent reduction of dihydroxyacetonephosphate (DHAP or glycerone phosphate) to glycerol 1-phosphate (G1P). The G1P thus generated is used as the glycerophosphate backbone of phospholipids in the cellular membranes of Archaea. The sequence is that of Glycerol-1-phosphate dehydrogenase [NAD(P)+] from Methanobrevibacter smithii (strain ATCC 35061 / DSM 861 / OCM 144 / PS).